The following is a 479-amino-acid chain: Cysteine--tRNA ligase (479 aa).

C29 is a Zn(2+) binding site. The short motif at 31 to 41 (ATVQGAPHIGH) is the 'HIGH' region element. The interval 171-197 (QRVEDMQDAPDADPRGKRDPRDFALWK) is disordered. Positions 182–197 (ADPRGKRDPRDFALWK) are enriched in basic and acidic residues. Residues C224, H249, and E253 each contribute to the Zn(2+) site. A 'KMSKS' region motif is present at residues 280–284 (KMSKS). An ATP-binding site is contributed by K283.

Belongs to the class-I aminoacyl-tRNA synthetase family. As to quaternary structure, monomer. The cofactor is Zn(2+).

Its subcellular location is the cytoplasm. It carries out the reaction tRNA(Cys) + L-cysteine + ATP = L-cysteinyl-tRNA(Cys) + AMP + diphosphate. In Kocuria rhizophila (strain ATCC 9341 / DSM 348 / NBRC 103217 / DC2201), this protein is Cysteine--tRNA ligase.